The sequence spans 660 residues: F-box/LRR-repeat protein 5 (660 aa).

The hemerythrin-like stretch occupies residues M1–C157. The Fe(3+) site is built by H15, H57, E58, E61, H80, H124, and E127. In terms of domain architecture, F-box spans S200–L246. Residues Y283–I305 form a disordered region. Residues E285 to P303 are compositionally biased toward acidic residues. 8 LRR repeats span residues E311–Y337, S338–T362, Q363–G389, C390–K417, I551–G576, C577–G604, C605–Y630, and C631–Q649. Positions 631, 645, 655, and 656 each coordinate [2Fe-2S] cluster.

Part of a SCF (SKP1-cullin-F-box) protein ligase complex. It depends on [2Fe-2S] cluster as a cofactor. In terms of processing, ubiquitinated upon iron and oxygen depletion, leading to its degradation by the proteasome. Ubiquitination is regulated by the hemerythrin-like region that acts as an oxygen and iron sensor.

It is found in the cytoplasm. The protein resides in the perinuclear region. It localises to the nucleus. It functions in the pathway protein modification; protein ubiquitination. Functionally, component of some SCF (SKP1-cullin-F-box) protein ligase complex that plays a central role in iron homeostasis by promoting the ubiquitination and subsequent degradation of ireb2/irp2. Upon high iron and oxygen level, it specifically recognizes and binds ireb2/irp2, promoting its ubiquitination and degradation by the proteasome. The polypeptide is F-box/LRR-repeat protein 5 (fbxl5) (Xenopus tropicalis (Western clawed frog)).